Here is a 306-residue protein sequence, read N- to C-terminus: D-aminoacyl-tRNA deacylase (306 aa).

The protein belongs to the DtdA deacylase family. In terms of assembly, monomer. It depends on Zn(2+) as a cofactor.

It catalyses the reaction a D-aminoacyl-tRNA + H2O = a tRNA + a D-alpha-amino acid + H(+). The catalysed reaction is glycyl-tRNA(Ala) + H2O = tRNA(Ala) + glycine + H(+). In terms of biological role, D-aminoacyl-tRNA deacylase with broad substrate specificity. By recycling D-aminoacyl-tRNA to D-amino acids and free tRNA molecules, this enzyme counteracts the toxicity associated with the formation of D-aminoacyl-tRNA entities in vivo. The sequence is that of D-aminoacyl-tRNA deacylase from Methanosarcina barkeri (strain Fusaro / DSM 804).